Consider the following 192-residue polypeptide: Orotate phosphoribosyltransferase (192 aa).

116-124 (EDIVTTGLS) serves as a coordination point for 5-phospho-alpha-D-ribose 1-diphosphate. The orotate site is built by Thr120 and Arg148.

It belongs to the purine/pyrimidine phosphoribosyltransferase family. PyrE subfamily. In terms of assembly, homodimer. Requires Mg(2+) as cofactor.

It carries out the reaction orotidine 5'-phosphate + diphosphate = orotate + 5-phospho-alpha-D-ribose 1-diphosphate. The protein operates within pyrimidine metabolism; UMP biosynthesis via de novo pathway; UMP from orotate: step 1/2. Catalyzes the transfer of a ribosyl phosphate group from 5-phosphoribose 1-diphosphate to orotate, leading to the formation of orotidine monophosphate (OMP). This chain is Orotate phosphoribosyltransferase, found in Brucella abortus (strain S19).